Reading from the N-terminus, the 350-residue chain is Phosphotriesterase-related protein (350 aa).

The a divalent metal cation site is built by His-22, His-24, Glu-169, His-201, His-230, and Asp-298.

The protein belongs to the metallo-dependent hydrolases superfamily. Phosphotriesterase family. The cofactor is a divalent metal cation.

The polypeptide is Phosphotriesterase-related protein (Drosophila sechellia (Fruit fly)).